A 68-amino-acid chain; its full sequence is Large ribosomal subunit protein uL29 (68 aa).

Belongs to the universal ribosomal protein uL29 family.

This is Large ribosomal subunit protein uL29 from Rhodospirillum rubrum (strain ATCC 11170 / ATH 1.1.1 / DSM 467 / LMG 4362 / NCIMB 8255 / S1).